Reading from the N-terminus, the 556-residue chain is Oxygen-dependent choline dehydrogenase (556 aa).

4–33 is an FAD binding site; the sequence is DYIIIGAGSAGNVLATRLTEDPNTSVLLLE. His473 acts as the Proton acceptor in catalysis.

Belongs to the GMC oxidoreductase family. The cofactor is FAD.

It catalyses the reaction choline + A = betaine aldehyde + AH2. The enzyme catalyses betaine aldehyde + NAD(+) + H2O = glycine betaine + NADH + 2 H(+). It functions in the pathway amine and polyamine biosynthesis; betaine biosynthesis via choline pathway; betaine aldehyde from choline (cytochrome c reductase route): step 1/1. Functionally, involved in the biosynthesis of the osmoprotectant glycine betaine. Catalyzes the oxidation of choline to betaine aldehyde and betaine aldehyde to glycine betaine at the same rate. This is Oxygen-dependent choline dehydrogenase from Shigella flexneri serotype 5b (strain 8401).